Reading from the N-terminus, the 309-residue chain is DnaJ protein ERDJ7 (309 aa).

The signal sequence occupies residues 1–36 (MSQVGSAGEGSNSMAAAPPPRLLLLVVLLLVPVSNA). Over 37–130 (IYCEEDDCYD…YRAYYGHKTD (94 aa)) the chain is Lumenal. The region spanning 43 to 107 (DCYDLLGVKQ…STRGQYDYAI (65 aa)) is the J domain. N55 is a glycosylation site (N-linked (GlcNAc...) asparagine). The helical transmembrane segment at 131-151 (PRAVLIGLLLIISAFQYLNQF) threads the bilayer. Over 152 to 219 (GRYSKAIETV…GVEKPSLWRL (68 aa)) the chain is Cytoplasmic. A helical transmembrane segment spans residues 220 to 242 (YGVQFILLPYSIGKVLSWKFCWF). Residues 243–309 (WRYRIKKLPY…EMRKESKRRR (67 aa)) lie on the Lumenal side of the membrane.

It localises to the endoplasmic reticulum membrane. Functionally, may play a role in protein folding in the endoplasmic reticulum. This Oryza sativa subsp. japonica (Rice) protein is DnaJ protein ERDJ7.